The primary structure comprises 251 residues: uncharacterized protein (251 aa).

Positions 1–15 (MSAISSLVLIGWAMC) are cleaved as a signal peptide. N-linked (GlcNAc...) asparagine glycans are attached at residues Asn225 and Asn242.

This is an uncharacterized protein from Encephalitozoon cuniculi (strain GB-M1) (Microsporidian parasite).